Consider the following 352-residue polypeptide: Phospho-N-acetylmuramoyl-pentapeptide-transferase (352 aa).

10 helical membrane passes run 10 to 30 (YMFFSYISVRAGFAFFIALFL), 67 to 87 (TMGGLIFIFATIVASLLCADL), 88 to 108 (NNFYVIIGILCLVLFCTIGLV), 129 to 149 (LLSQFIASFICVFFLYIMGIN), 159 to 179 (YALFDGGIFMLALWILVIISS), 191 to 211 (GLATVPSIFSLLSLSAFLYLS), 227 to 247 (GLGELVVLSAALVGALMGFLW), 255 to 275 (VFMGDSGSLSIGAFLGYLGIV), 280 to 300 (ILLLLIGFVFVLETISVILQV), and 329 to 349 (KIIVRFWMIALLANIIALISI).

The protein belongs to the glycosyltransferase 4 family. MraY subfamily. It depends on Mg(2+) as a cofactor.

The protein resides in the cell inner membrane. The catalysed reaction is UDP-N-acetyl-alpha-D-muramoyl-L-alanyl-gamma-D-glutamyl-meso-2,6-diaminopimeloyl-D-alanyl-D-alanine + di-trans,octa-cis-undecaprenyl phosphate = di-trans,octa-cis-undecaprenyl diphospho-N-acetyl-alpha-D-muramoyl-L-alanyl-D-glutamyl-meso-2,6-diaminopimeloyl-D-alanyl-D-alanine + UMP. Its pathway is cell wall biogenesis; peptidoglycan biosynthesis. Its function is as follows. Catalyzes the initial step of the lipid cycle reactions in the biosynthesis of the cell wall peptidoglycan: transfers peptidoglycan precursor phospho-MurNAc-pentapeptide from UDP-MurNAc-pentapeptide onto the lipid carrier undecaprenyl phosphate, yielding undecaprenyl-pyrophosphoryl-MurNAc-pentapeptide, known as lipid I. This is Phospho-N-acetylmuramoyl-pentapeptide-transferase from Campylobacter lari (strain RM2100 / D67 / ATCC BAA-1060).